A 454-amino-acid chain; its full sequence is Pup--protein ligase (454 aa).

Glu-9 lines the Mg(2+) pocket. Residue Arg-53 coordinates ATP. Tyr-55 is a Mg(2+) binding site. The active-site Proton acceptor is the Asp-57. Glu-63 contributes to the Mg(2+) binding site. ATP-binding residues include Thr-66 and Trp-420.

This sequence belongs to the Pup ligase/Pup deamidase family. Pup-conjugating enzyme subfamily.

It catalyses the reaction ATP + [prokaryotic ubiquitin-like protein]-L-glutamate + [protein]-L-lysine = ADP + phosphate + N(6)-([prokaryotic ubiquitin-like protein]-gamma-L-glutamyl)-[protein]-L-lysine.. The protein operates within protein degradation; proteasomal Pup-dependent pathway. Its pathway is protein modification; protein pupylation. Its function is as follows. Catalyzes the covalent attachment of the prokaryotic ubiquitin-like protein modifier Pup to the proteasomal substrate proteins, thereby targeting them for proteasomal degradation. This tagging system is termed pupylation. The ligation reaction involves the side-chain carboxylate of the C-terminal glutamate of Pup and the side-chain amino group of a substrate lysine. The polypeptide is Pup--protein ligase (Paenarthrobacter aurescens (strain TC1)).